We begin with the raw amino-acid sequence, 494 residues long: Probable cytosol aminopeptidase (494 aa).

2 residues coordinate Mn(2+): Lys-260 and Asp-265. Lys-272 is an active-site residue. Mn(2+) contacts are provided by Asp-283, Asp-342, and Glu-344. Residue Arg-346 is part of the active site.

The protein belongs to the peptidase M17 family. It depends on Mn(2+) as a cofactor.

It localises to the cytoplasm. The enzyme catalyses Release of an N-terminal amino acid, Xaa-|-Yaa-, in which Xaa is preferably Leu, but may be other amino acids including Pro although not Arg or Lys, and Yaa may be Pro. Amino acid amides and methyl esters are also readily hydrolyzed, but rates on arylamides are exceedingly low.. It carries out the reaction Release of an N-terminal amino acid, preferentially leucine, but not glutamic or aspartic acids.. In terms of biological role, presumably involved in the processing and regular turnover of intracellular proteins. Catalyzes the removal of unsubstituted N-terminal amino acids from various peptides. In Bacillus cereus (strain AH187), this protein is Probable cytosol aminopeptidase.